A 301-amino-acid polypeptide reads, in one-letter code: Aldose reductase (301 aa).

An NADP(+)-binding site is contributed by 11–20 (GKEIPTVGLG). The active-site Proton donor is Tyr51. Residue His111 participates in substrate binding. Position 209–266 (209–266 (SSLGSAPGSSAKVRDDKTIKAIAKKYGCAPSQIILSYITAQGICVIPKSRSKEHLREN)) interacts with NADP(+).

It belongs to the aldo/keto reductase family.

The protein resides in the cytoplasm. The enzyme catalyses an alditol + NAD(+) = an aldose + NADH + H(+). It catalyses the reaction an alditol + NADP(+) = an aldose + NADPH + H(+). Functionally, catalyzes the NADPH-dependent reduction of a wide variety of carbonyl-containing compounds to their corresponding alcohols with a broad range of catalytic efficiencies. This chain is Aldose reductase, found in Encephalitozoon cuniculi (strain GB-M1) (Microsporidian parasite).